Reading from the N-terminus, the 3658-residue chain is Serine/threonine-protein kinase SMG1 (3658 aa).

2 disordered regions span residues 1–99 and 116–142; these read MSRR…TYGR and FTSV…MSYS. A compositionally biased stretch (polar residues) spans 24 to 33; sequence NDWQPRTDSA. Basic and acidic residues-rich tracts occupy residues 67 to 84 and 127 to 136; these read QRHD…DEKG and ATKDMRKSQE. Position 171 is an N6-acetyllysine (lysine 171). In terms of domain architecture, FAT spans 1281–1864; it reads RELQKSIEVQ…LYPAIVGTIS (584 aa). One copy of the HEAT repeat lies at 1815-1850; that stretch reads APWRGIIPQLFSRLNHPEVYVRQSICNLLCRVAQDS. The tract at residues 1896–1917 is disordered; that stretch reads ECEGGSPPASQDSNKDEPKSGL. In terms of domain architecture, PI3K/PI4K catalytic spans 2122 to 2461; it reads VGGTITILPT…MEREITRSLF (340 aa). The segment at 2128 to 2134 is G-loop; the sequence is ILPTKTK. The tract at residues 2330–2338 is catalytic loop; sequence GLGDRHLDN. Residues 2350 to 2374 form an activation loop region; sequence HIDYNVCFEKGKSLRVPEKVPFRMT. Threonine 3547 is modified (phosphothreonine). Phosphoserine is present on residues serine 3553 and serine 3567. Positions 3565 to 3576 are enriched in polar residues; the sequence is ATSADTPPSTIP. Residues 3565–3588 are disordered; it reads ATSADTPPSTIPGTGKSIACSPKK. A phosphothreonine mark is found at threonine 3570 and threonine 3574. One can recognise an FATC domain in the interval 3626 to 3658; the sequence is RRMSVAEQVDYVIKEATNLDNLAQLYEGWTAWV.

This sequence belongs to the PI3/PI4-kinase family. As to quaternary structure, component of the SMG1C complex composed of SMG1, SMG8 and SMG9; the recruitment of SMG8 to SMG1 N-terminus induces a large conformational change in the SMG1 C-terminal head domain containing the catalytic domain. Component of the transient SURF (SMG1-UPF1-eRF1-eRF3) complex. Part of a complex composed of SMG1, DHX34 and UPF1; within the complex DHX34 acts as a scaffolding protein to facilitate SMG1 phosphorylation of UPF1. Interacts with PRKCI. Interacts with TELO2 and TTI1. Interacts with RUVBL1 and RUVBL2. Interacts with DHX34 (via C-terminus); the interaction is RNA-independent. It depends on Mn(2+) as a cofactor. Autophosphorylated.

Its subcellular location is the nucleus. The protein resides in the cytoplasm. It carries out the reaction L-seryl-[protein] + ATP = O-phospho-L-seryl-[protein] + ADP + H(+). It catalyses the reaction L-threonyl-[protein] + ATP = O-phospho-L-threonyl-[protein] + ADP + H(+). Inhibited by caffeine, LY294002 and wortmannin. Its function is as follows. Serine/threonine protein kinase involved in both mRNA surveillance and genotoxic stress response pathways. Recognizes the substrate consensus sequence [ST]-Q. Plays a central role in nonsense-mediated decay (NMD) of mRNAs containing premature stop codons by phosphorylating UPF1/RENT1. Recruited by release factors to stalled ribosomes together with SMG8 and SMG9 (forming the SMG1C protein kinase complex), and UPF1 to form the transient SURF (SMG1-UPF1-eRF1-eRF3) complex. In EJC-dependent NMD, the SURF complex associates with the exon junction complex (EJC) through UPF2 and allows the formation of an UPF1-UPF2-UPF3 surveillance complex which is believed to activate NMD. Also acts as a genotoxic stress-activated protein kinase that displays some functional overlap with ATM. Can phosphorylate p53/TP53 and is required for optimal p53/TP53 activation after cellular exposure to genotoxic stress. Its depletion leads to spontaneous DNA damage and increased sensitivity to ionizing radiation (IR). May activate PRKCI but not PRKCZ. The protein is Serine/threonine-protein kinase SMG1 of Mus musculus (Mouse).